The primary structure comprises 81 residues: U-poneritoxin(01)-Om2a (81 aa).

The first 25 residues, 1 to 25 (MKPSGITFAFLVVFMMAIMYNSVQA), serve as a signal peptide directing secretion. Residues 26–47 (AAIADADADAEAKAFADAFAEA) constitute a propeptide that is removed on maturation.

It belongs to the formicidae venom precursor-01 superfamily. Truncated sequences of this peptide have also been found in the venom. It is possible they have been cleaved in the venom. As to expression, expressed by the venom gland.

Its subcellular location is the secreted. Its function is as follows. Cationic amphipathic alpha-helical peptide with antimicrobial activities against E.coli (MIC=6.2 uM), S.aureus (MIC=6.2 uM), and S.cerevisiae (MIC=50 uM). Also shows histamine-releasing activity (30.1% at 10 uM) and a weak hemolytic activity (10.4% at 50 uM). This is U-poneritoxin(01)-Om2a from Odontomachus monticola (Trap-jaw ant).